Consider the following 354-residue polypeptide: Inactive ADP-ribosyltransferase ARH2 (354 aa).

Residue Ser27 is modified to Phosphoserine.

The protein belongs to the ADP-ribosylglycohydrolase family.

Its subcellular location is the cytoplasm. The protein localises to the myofibril. The protein resides in the sarcomere. Its function is as follows. Required for myofibril assembly and outgrowth of the cardiac chambers in the developing heart. Appears to be catalytically inactive, showing no activity against O-acetyl-ADP-ribose. This is Inactive ADP-ribosyltransferase ARH2 (ADPRHL1) from Pongo abelii (Sumatran orangutan).